A 149-amino-acid polypeptide reads, in one-letter code: Transcriptional regulator MraZ (149 aa).

2 SpoVT-AbrB domains span residues 6 to 52 (RSYR…TPED) and 81 to 124 (VEEL…SEEE).

Belongs to the MraZ family. In terms of assembly, forms oligomers.

The protein resides in the cytoplasm. Its subcellular location is the nucleoid. This is Transcriptional regulator MraZ from Oleidesulfovibrio alaskensis (strain ATCC BAA-1058 / DSM 17464 / G20) (Desulfovibrio alaskensis).